The primary structure comprises 64 residues: Conotoxin reg3k (64 aa).

The N-terminal stretch at 1–20 is a signal peptide; sequence MMFKLGVLLTICLLLFPLTA. Positions 21–48 are excised as a propeptide; the sequence is LQLDWDQPGDHMLDISSEIDDRWFDPVR. 3 disulfides stabilise this stretch: Cys-50–Cys-60, Cys-51–Cys-58, and Cys-56–Cys-61. Pro-59 bears the 4-hydroxyproline mark.

In terms of tissue distribution, expressed by the venom duct.

It localises to the secreted. This is Conotoxin reg3k from Conus regius (Crown cone).